A 217-amino-acid chain; its full sequence is Snake venom metalloproteinase lebetase-4 (217 aa).

Positions 1–14 (SCRKKASQLNLTPE) are excised as a propeptide. Q15 is subject to Pyrrolidone carboxylic acid. In terms of domain architecture, Peptidase M12B spans 21 to 217 (RYIELVIVAD…HNPQCILNQP (197 aa)). Positions 24 and 108 each coordinate Ca(2+). Cystine bridges form between C132/C212, C172/C196, and C174/C179. H157 contributes to the Zn(2+) binding site. E158 is an active-site residue. Residues H161 and H167 each coordinate Zn(2+). Ca(2+)-binding residues include C212 and N215.

Belongs to the venom metalloproteinase (M12B) family. P-I subfamily. As to quaternary structure, monomer. Requires Zn(2+) as cofactor. As to expression, expressed by the venom gland.

It is found in the secreted. Fibrinolytic and caseinolytic activities are inhibited by Cd(2+), Cu(2+) and Co(2+) ions. Not inhibited by Mg(2+), Ca(2+) and Ba(2+). Also inhibited by EDTA, EGTA and 1,10-phenanthroline. In terms of biological role, snake venom zinc metalloprotease that hydrolyzes the Aalpha-chain and more slowly the Bbeta-chain of fibrin and fibrinogen. Also hydrolyzes casein and B-chain of oxidized insulin. Its fibrinolytic activity is direct, without any plasminogen activation. Inhibits ADP-induced and collagen-induced platelet aggregation. Shows low hemorrhagic activity. Cleaves the plasma proteinase inhibitors alpha(2)-macroglobulin (A2M) and alpha(2)M-related pregnancy zone protein (PZP), and is inhibited by them. This Macrovipera lebetinus (Levantine viper) protein is Snake venom metalloproteinase lebetase-4.